A 204-amino-acid polypeptide reads, in one-letter code: Ribosomal RNA small subunit methyltransferase G (204 aa).

S-adenosyl-L-methionine is bound by residues G76, L81, 127–128 (IE), and R140.

The protein belongs to the methyltransferase superfamily. RNA methyltransferase RsmG family.

It localises to the cytoplasm. It catalyses the reaction guanosine(527) in 16S rRNA + S-adenosyl-L-methionine = N(7)-methylguanosine(527) in 16S rRNA + S-adenosyl-L-homocysteine. In terms of biological role, specifically methylates the N7 position of guanine in position 527 of 16S rRNA. This chain is Ribosomal RNA small subunit methyltransferase G, found in Francisella philomiragia subsp. philomiragia (strain ATCC 25017 / CCUG 19701 / FSC 153 / O#319-036).